Consider the following 545-residue polypeptide: Pseudouridylate synthase RPUSD2 (545 aa).

Positions 48 to 121 (GLRASHQQNG…PPPKKRRTGV (74 aa)) are disordered. Phosphoserine is present on Ser68. Residue Asp274 is part of the active site. Residue Thr477 is modified to Phosphothreonine.

The protein belongs to the pseudouridine synthase RluA family.

It catalyses the reaction a uridine in mRNA = a pseudouridine in mRNA. Functionally, pseudouridine synthase that catalyzes pseudouridylation of mRNAs. In Homo sapiens (Human), this protein is Pseudouridylate synthase RPUSD2.